Reading from the N-terminus, the 107-residue chain is MTEKFKKLDPDTAIDIAYDIFLEMAGENLDPTDILLFNLQFEDHGGVEFVETADDWEQEIGVLIDPDEYAEVWVGLVNEQDEMDDIFAKFLISHKEEDREYHVVWKK.

It belongs to the putative dsDNA mimic protein family.

Its function is as follows. May act as a double-stranded DNA (dsDNA) mimic. Probably regulates the activity of a dsDNA-binding protein. The polypeptide is Putative double-stranded DNA mimic protein HS_0995 (Histophilus somni (strain 129Pt) (Haemophilus somnus)).